Reading from the N-terminus, the 408-residue chain is Peptidase T (408 aa).

His-78 provides a ligand contact to Zn(2+). The active site involves Asp-80. A Zn(2+)-binding site is contributed by Asp-141. Glu-175 functions as the Proton acceptor in the catalytic mechanism. Residues Glu-176, Asp-198, and His-380 each coordinate Zn(2+).

It belongs to the peptidase M20B family. Zn(2+) is required as a cofactor.

Its subcellular location is the cytoplasm. It carries out the reaction Release of the N-terminal residue from a tripeptide.. In terms of biological role, cleaves the N-terminal amino acid of tripeptides. In Clostridium botulinum (strain ATCC 19397 / Type A), this protein is Peptidase T.